The sequence spans 244 residues: Transcriptional activator protein CarR (244 aa).

In terms of domain architecture, HTH luxR-type spans 162-227 (DNSRNALLSP…HAITKALELN (66 aa)). Positions 186 to 205 (YKEVSRILGISEVTVKFHIN) form a DNA-binding region, H-T-H motif.

This sequence belongs to the autoinducer-regulated transcriptional regulatory protein family.

Functions as an OHLL responsive transcriptional regulator which acts in the control of the biosynthesis of carbapenem antibiotics. This is Transcriptional activator protein CarR (carR) from Pectobacterium carotovorum subsp. carotovorum (Erwinia carotovora subsp. carotovora).